The sequence spans 984 residues: Mineralocorticoid receptor (984 aa).

The tract at residues 1–602 (METKGYHSLP…STGSSRPSKI (602 aa)) is modulating. Polar residues predominate over residues 231 to 243 (QGTPLTCSPNVEN). Disordered stretches follow at residues 231–329 (QGTP…AAST) and 346–369 (SGTS…EKGA). Residues Ser-250, Ser-259, Ser-283, Ser-287, and Ser-299 each carry the phosphoserine modification. A compositionally biased stretch (low complexity) spans 259 to 291 (SPLSSPLSSMKSSISSPPSHCSVKSPVSSPNNV). Polar residues predominate over residues 292–329 (TLRSSVSSPANINNSRCSVSSPSNTNNRSTLSSPAAST). Residues 346–355 (SGTSAGSSTS) show a composition bias toward low complexity. 8 residues coordinate Zn(2+): Cys-603, Cys-606, Cys-620, Cys-623, Cys-639, Cys-645, Cys-655, and Cys-658. NR C4-type zinc fingers lie at residues 603-623 (CLVC…CGSC) and 639-663 (CAGR…LQKC). Positions 603-668 (CLVCGDEASG…RLQKCLQAGM (66 aa)) form a DNA-binding region, nuclear receptor. The interval 669 to 725 (NLGARKSKKLGKLKGIHEEQPQQQQPPPPPPPPQSPEEGTTYIAPAKEPSVNTALVP) is hinge. Positions 684 to 710 (IHEEQPQQQQPPPPPPPPQSPEEGTTY) are disordered. A compositionally biased stretch (pro residues) spans 692 to 703 (QQPPPPPPPPQS). The NR LBD domain occupies 726 to 964 (QLSTISRALT…EFPAMLVEII (239 aa)). Positions 770 and 776 each coordinate 21-hydroxyprogesterone. 2 residues coordinate aldosterone: Asn-770 and Gln-776. 2 residues coordinate progesterone: Asn-770 and Gln-776. The tract at residues 782 to 785 (KWAK) is important for coactivator binding. 21-hydroxyprogesterone contacts are provided by Arg-817 and Thr-945. 2 residues coordinate aldosterone: Arg-817 and Thr-945. Residues Arg-817 and Thr-945 each contribute to the progesterone site.

This sequence belongs to the nuclear hormone receptor family. NR3 subfamily. Heteromultimeric cytoplasmic complex with HSP90, HSP70, and FKBP4, in the absence of ligand. After ligand binding, it translocates to the nucleus and binds to DNA as a homodimer and as a heterodimer with NR3C1. Binds the coactivator NCOA2. May interact with HSD11B2 in the absence of ligand. Binds the coactivators NCOA1, TIF1 and NRIP1. In terms of processing, phosphorylated.

The protein resides in the cytoplasm. It is found in the nucleus. It localises to the endoplasmic reticulum membrane. Receptor for both mineralocorticoids (MC) such as aldosterone and glucocorticoids (GC) such as corticosterone or cortisol. Binds to mineralocorticoid response elements (MRE) and transactivates target genes. The effect of MC is to increase ion and water transport and thus raise extracellular fluid volume and blood pressure and lower potassium levels. The sequence is that of Mineralocorticoid receptor (NR3C2) from Aotus nancymaae (Ma's night monkey).